A 217-amino-acid chain; its full sequence is 4-hydroxy-tetrahydrodipicolinate reductase (217 aa).

NAD(+) is bound by residues 7–12 (GFKGKM), 71–73 (GTT), and 95–98 (SYNF). His127 serves as the catalytic Proton donor/acceptor. His128 contacts (S)-2,3,4,5-tetrahydrodipicolinate. Lys131 (proton donor) is an active-site residue. 137–138 (GT) provides a ligand contact to (S)-2,3,4,5-tetrahydrodipicolinate.

Belongs to the DapB family.

The protein localises to the cytoplasm. It catalyses the reaction (S)-2,3,4,5-tetrahydrodipicolinate + NAD(+) + H2O = (2S,4S)-4-hydroxy-2,3,4,5-tetrahydrodipicolinate + NADH + H(+). The enzyme catalyses (S)-2,3,4,5-tetrahydrodipicolinate + NADP(+) + H2O = (2S,4S)-4-hydroxy-2,3,4,5-tetrahydrodipicolinate + NADPH + H(+). The protein operates within amino-acid biosynthesis; L-lysine biosynthesis via DAP pathway; (S)-tetrahydrodipicolinate from L-aspartate: step 4/4. Catalyzes the conversion of 4-hydroxy-tetrahydrodipicolinate (HTPA) to tetrahydrodipicolinate. This chain is 4-hydroxy-tetrahydrodipicolinate reductase, found in Thermosipho africanus (strain TCF52B).